We begin with the raw amino-acid sequence, 356 residues long: MDVASARSISSHPSYYGKPICSSQSSLIRISRDKVCCFGRISNGMTSFTTSLHAVPSEKFMGETRRTGIQWSNRSLRHDPYRFLDKKSPRSSQLARDITVRADLSGAATPDSSFPEPEIKLSSRLRGIFFCVVAGISATFLIVLMIIGHPFVLLFDPYRRKFHHFIAKLWASISIYPFYKINIEGLENLPSSDTPAVYVSNHQSFLDIYTLLSLGKSFKFISKTGIFVIPIIGWAMSMMGVVPLKRMDPRSQVDCLKRCMELLKKGASVFFFPEGTRSKDGRLGSFKKGAFTVAAKTGVAVVPITLMGTGKIMPTGSEGILNHGNVRVIIHKPIHGSKADVLCNEARSKIAESMDL.

The transit peptide at 1–56 (MDVASARSISSHPSYYGKPICSSQSSLIRISRDKVCCFGRISNGMTSFTTSLHAVP) directs the protein to the chloroplast. Residues 127 to 147 (GIFFCVVAGISATFLIVLMII) form a helical membrane-spanning segment. The HXXXXD motif signature appears at 202–207 (HQSFLD). A helical transmembrane segment spans residues 224 to 244 (TGIFVIPIIGWAMSMMGVVPL).

The protein belongs to the 1-acyl-sn-glycerol-3-phosphate acyltransferase family. As to expression, widely expressed. Expressed at higher level in leaves. Expressed at lower level in silique walls compared to leaves.

The protein localises to the plastid. It localises to the chloroplast membrane. It catalyses the reaction a fatty acyl-[ACP] + a 1-acyl-sn-glycero-3-phosphate = a 1,2-diacyl-sn-glycero-3-phosphate + holo-[ACP]. It carries out the reaction a 1-acyl-sn-glycero-3-phosphate + an acyl-CoA = a 1,2-diacyl-sn-glycero-3-phosphate + CoA. It functions in the pathway phospholipid metabolism; CDP-diacylglycerol biosynthesis; CDP-diacylglycerol from sn-glycerol 3-phosphate: step 2/3. Plastidial enzyme of the prokaryotic glycerol-3-phosphate pathway that converts lysophosphatidic acid (LPA) into phosphatidic acid by incorporating an acyl moiety at position sn-2. Utilizes palmitoyl-ACP (16:0-ACP) to produce phosphatidic acid containing a saturated group at position sn-2, which is characteristic of lipids synthesized by the prokaryotic pathway. In vitro, can use 16:0-CoA as acyl donor. Essential for embryo development during the transition from the globular to the heart stage when chloroplasts begin to form. The sequence is that of 1-acyl-sn-glycerol-3-phosphate acyltransferase LPAT1, chloroplastic from Arabidopsis thaliana (Mouse-ear cress).